The following is a 468-amino-acid chain: MSVLLFGVSHRSAPVVVLEQLSIDESDQVKIIDRVLASPLVTEAMVLSTCNRVEVYAVVDAFHGGLSVIGQVLAEHSGMSMGELTKYAYVRYSEAAVEHLFAVASGLDSAVIGEQQVLGQVRRAYAVAESNRTVGRVLHELAQRALSVGKRVHSETAIDAAGASVVSVALGMAERKLGSLAGTTAVVIGAGAMGALSAVHLTRAGVGHIQVLNRSLSRAQRLARRIRESGVPAEALALDRLANVLADADVVVSCTGAVRPVVSLADVHHALAAARRDEATRPLVICDLGMPRDVDPAVARLPCVWVVDVDSVQHEPSAHAAAADVEAARHIVAAEVASYLVGQRMAEVTPTVTALRQRAAEVVEAELLRLDNRLPGLQSVQREEVARTVRRVVDKLLHAPTVRIKQLASAPGGDSYAEALRELFELDQTAVDAVATAGELPVVPSGFDAESRRGGGDMQSSPKRSPSN.

Substrate contacts are provided by residues 49–52, Ser-109, 114–116, and Gln-120; these read TCNR and EQQ. Cys-50 (nucleophile) is an active-site residue. Residue 189–194 participates in NADP(+) binding; that stretch reads GAGAMG. Residues 443 to 468 form a disordered region; the sequence is VPSGFDAESRRGGGDMQSSPKRSPSN. Residues 458–468 show a composition bias toward polar residues; sequence MQSSPKRSPSN.

The protein belongs to the glutamyl-tRNA reductase family. Homodimer.

It carries out the reaction (S)-4-amino-5-oxopentanoate + tRNA(Glu) + NADP(+) = L-glutamyl-tRNA(Glu) + NADPH + H(+). Its pathway is porphyrin-containing compound metabolism; protoporphyrin-IX biosynthesis; 5-aminolevulinate from L-glutamyl-tRNA(Glu): step 1/2. Catalyzes the NADPH-dependent reduction of glutamyl-tRNA(Glu) to glutamate 1-semialdehyde (GSA). This chain is Glutamyl-tRNA reductase, found in Mycobacterium tuberculosis (strain ATCC 25177 / H37Ra).